The chain runs to 1190 residues: Isoleucine--tRNA ligase, cytoplasmic (1190 aa).

Positions 49–59 (PFATGLPHYGH) match the 'HIGH' region motif. A disordered region spans residues 271-299 (DKPKAKLSNGPAGDTKKANPKAKGAKPES). A 'KMSKS' region motif is present at residues 632 to 636 (KMAKK). K635 lines the ATP pocket.

The protein belongs to the class-I aminoacyl-tRNA synthetase family.

Its subcellular location is the cytoplasm. It is found in the cytosol. It carries out the reaction tRNA(Ile) + L-isoleucine + ATP = L-isoleucyl-tRNA(Ile) + AMP + diphosphate. The sequence is that of Isoleucine--tRNA ligase, cytoplasmic from Arabidopsis thaliana (Mouse-ear cress).